The sequence spans 393 residues: Cell division protein FtsZ 2 (393 aa).

A disordered region spans residues Met-1–Phe-28. GTP contacts are provided by residues Gly-40 to Asn-44, Gly-127 to Gly-129, Glu-158, Arg-161, and Asp-204. Residues Gly-339–Arg-393 form a disordered region. Positions Gln-345 to Asp-364 are enriched in basic and acidic residues. Residues Gly-367–Ser-376 show a composition bias toward gly residues.

This sequence belongs to the FtsZ family. As to quaternary structure, homodimer. Polymerizes to form a dynamic ring structure in a strictly GTP-dependent manner. Interacts directly with several other division proteins.

The protein resides in the cytoplasm. Essential cell division protein that forms a contractile ring structure (Z ring) at the future cell division site. The regulation of the ring assembly controls the timing and the location of cell division. One of the functions of the FtsZ ring is to recruit other cell division proteins to the septum to produce a new cell wall between the dividing cells. Binds GTP and shows GTPase activity. Overexpression causes significant changes in cell morphology. This is Cell division protein FtsZ 2 from Halobacterium salinarum (strain ATCC 29341 / DSM 671 / R1).